A 514-amino-acid polypeptide reads, in one-letter code: 3-octaprenyl-4-hydroxybenzoate carboxy-lyase (514 aa).

Asparagine 177 is a binding site for Mn(2+). Prenylated FMN-binding positions include 180-182 (IYR), 194-196 (RWL), and 199-200 (RG). Glutamate 243 contacts Mn(2+). Aspartate 314 (proton donor) is an active-site residue.

Belongs to the UbiD family. As to quaternary structure, homohexamer. Prenylated FMN serves as cofactor. Mn(2+) is required as a cofactor.

Its subcellular location is the cell membrane. It carries out the reaction a 4-hydroxy-3-(all-trans-polyprenyl)benzoate + H(+) = a 2-(all-trans-polyprenyl)phenol + CO2. Its pathway is cofactor biosynthesis; ubiquinone biosynthesis. In terms of biological role, catalyzes the decarboxylation of 3-octaprenyl-4-hydroxy benzoate to 2-octaprenylphenol, an intermediate step in ubiquinone biosynthesis. The sequence is that of 3-octaprenyl-4-hydroxybenzoate carboxy-lyase from Bordetella parapertussis (strain 12822 / ATCC BAA-587 / NCTC 13253).